The chain runs to 383 residues: S-adenosylmethionine synthase (383 aa).

Histidine 22 provides a ligand contact to ATP. Aspartate 24 serves as a coordination point for Mg(2+). Glutamate 50 is a binding site for K(+). L-methionine-binding residues include glutamate 63 and glutamine 99. Residues glutamine 99–serine 109 form a flexible loop region. ATP-binding positions include aspartate 160–lysine 162, aspartate 235, arginine 241–lysine 242, serine 258, and lysine 262. Aspartate 235 provides a ligand contact to L-methionine. Residue lysine 266 coordinates L-methionine.

Belongs to the AdoMet synthase family. Homotetramer; dimer of dimers. It depends on Mg(2+) as a cofactor. K(+) is required as a cofactor.

It is found in the cytoplasm. It catalyses the reaction L-methionine + ATP + H2O = S-adenosyl-L-methionine + phosphate + diphosphate. The protein operates within amino-acid biosynthesis; S-adenosyl-L-methionine biosynthesis; S-adenosyl-L-methionine from L-methionine: step 1/1. Its function is as follows. Catalyzes the formation of S-adenosylmethionine (AdoMet) from methionine and ATP. The overall synthetic reaction is composed of two sequential steps, AdoMet formation and the subsequent tripolyphosphate hydrolysis which occurs prior to release of AdoMet from the enzyme. In Mycoplasma pneumoniae (strain ATCC 29342 / M129 / Subtype 1) (Mycoplasmoides pneumoniae), this protein is S-adenosylmethionine synthase.